Reading from the N-terminus, the 439-residue chain is Ribosomal protein uS12 methylthiotransferase RimO (439 aa).

The region spanning 3 to 115 is the MTTase N-terminal domain; sequence NKLHIVSLGC…IDELLVEKKS (113 aa). [4Fe-4S] cluster is bound by residues Cys12, Cys46, Cys78, Cys146, Cys150, and Cys153. In terms of domain architecture, Radical SAM core spans 132 to 361; sequence TGSTYHAYIK…GKIAADVMQA (230 aa).

Belongs to the methylthiotransferase family. RimO subfamily. [4Fe-4S] cluster serves as cofactor.

It localises to the cytoplasm. The catalysed reaction is L-aspartate(89)-[ribosomal protein uS12]-hydrogen + (sulfur carrier)-SH + AH2 + 2 S-adenosyl-L-methionine = 3-methylsulfanyl-L-aspartate(89)-[ribosomal protein uS12]-hydrogen + (sulfur carrier)-H + 5'-deoxyadenosine + L-methionine + A + S-adenosyl-L-homocysteine + 2 H(+). Its function is as follows. Catalyzes the methylthiolation of an aspartic acid residue of ribosomal protein uS12. This is Ribosomal protein uS12 methylthiotransferase RimO from Sulfurimonas denitrificans (strain ATCC 33889 / DSM 1251) (Thiomicrospira denitrificans (strain ATCC 33889 / DSM 1251)).